We begin with the raw amino-acid sequence, 425 residues long: Histidine--tRNA ligase (425 aa).

The protein belongs to the class-II aminoacyl-tRNA synthetase family. In terms of assembly, homodimer.

The protein localises to the cytoplasm. It catalyses the reaction tRNA(His) + L-histidine + ATP = L-histidyl-tRNA(His) + AMP + diphosphate + H(+). This is Histidine--tRNA ligase from Chlorobium chlorochromatii (strain CaD3).